The chain runs to 87 residues: Small ribosomal subunit protein bS20 (87 aa).

Residues 1 to 22 (MANSAQARKRARQSLKARAHNA) are disordered. The span at 7 to 19 (ARKRARQSLKARA) shows a compositional bias: basic residues.

It belongs to the bacterial ribosomal protein bS20 family.

Binds directly to 16S ribosomal RNA. This is Small ribosomal subunit protein bS20 from Laribacter hongkongensis (strain HLHK9).